The sequence spans 380 residues: Probable acyl-CoA dehydrogenase YngJ (380 aa).

FAD is bound by residues 123 to 132 (FGLTEPNAGS), 156 to 158 (WIT), Arg-269, and 337 to 341 (QIHGG). The active-site Proton acceptor is Glu-364. 366 to 368 (TSE) is a binding site for FAD.

The protein belongs to the acyl-CoA dehydrogenase family. The cofactor is FAD.

It carries out the reaction a 2,3-saturated acyl-CoA + A = a 2,3-dehydroacyl-CoA + AH2. The chain is Probable acyl-CoA dehydrogenase YngJ (yngJ) from Bacillus subtilis (strain 168).